We begin with the raw amino-acid sequence, 403 residues long: Putative F-box/LRR-repeat protein At5g38386 (403 aa).

The region spanning 1 to 47 (MDHLSNLPDELLCHIMSFLTTKEAALISVLSKRWRNLIAFVPNLDIF) is the F-box domain. LRR repeat units lie at residues 64–91 (IRQL…SLCC), 93–119 (GGSY…DLSM), 131–156 (VFEN…VMNH), 175–203 (LKTL…SYSD), 243–274 (YLYF…SIKS), and 275–300 (VESR…VLEA).

The chain is Putative F-box/LRR-repeat protein At5g38386 from Arabidopsis thaliana (Mouse-ear cress).